Reading from the N-terminus, the 229-residue chain is RNA chaperone ProQ (229 aa).

Residues 105-178 are disordered; that stretch reads EAKARVQAQR…PREEKHTPVS (74 aa). Residues 117–136 are compositionally biased toward basic and acidic residues; it reads QQAKKREAAAAAGDKESAPR. Residues 137 to 146 show a composition bias toward basic residues; sequence RERKPRPAAP. Residues 147-176 show a composition bias toward basic and acidic residues; sequence RRKEGAERKPRAEKPAAKAPRAPREEKHTP.

It belongs to the ProQ family.

The protein resides in the cytoplasm. RNA chaperone with significant RNA binding, RNA strand exchange and RNA duplexing activities. May regulate ProP activity through an RNA-based, post-transcriptional mechanism. This Escherichia fergusonii (strain ATCC 35469 / DSM 13698 / CCUG 18766 / IAM 14443 / JCM 21226 / LMG 7866 / NBRC 102419 / NCTC 12128 / CDC 0568-73) protein is RNA chaperone ProQ.